We begin with the raw amino-acid sequence, 420 residues long: Torsin-4A (420 aa).

A helical transmembrane segment spans residues 130–150 (CLLLFIAIVCFQIFNAIENLD). 202–209 (GPSGVGKS) contacts ATP.

It belongs to the ClpA/ClpB family. Torsin subfamily.

It localises to the membrane. This chain is Torsin-4A (tor4a), found in Xenopus tropicalis (Western clawed frog).